Here is a 471-residue protein sequence, read N- to C-terminus: Rho GTPase-activating protein 15 (471 aa).

The disordered stretch occupies residues 1-20; sequence MQKSTNSDIPVETLNPTRQG. The residue at position 43 (S43) is a Phosphoserine. Residues 79–189 form the PH domain; the sequence is MVEKEGYLQK…WFHAIKNAID (111 aa). Residues S196, S199, and S243 each carry the phosphoserine modification. The Rho-GAP domain occupies 281–470; that stretch reads SHLHTLCERE…LMLSAYDQIF (190 aa).

Its subcellular location is the cytoplasm. The protein resides in the membrane. Functionally, GTPase activator for the Rho-type GTPases by converting them to an inactive GDP-bound state. Has activity toward RAC1. Overexpression results in an increase in actin stress fibers and cell contraction. The sequence is that of Rho GTPase-activating protein 15 (ARHGAP15) from Bos taurus (Bovine).